The primary structure comprises 195 residues: PRS fimbrial minor pilin protein (195 aa).

The signal sequence occupies residues 1–22; it reads MRLRFSVPLFFFGCVFVHGVFA. Cysteine 58 and cysteine 97 are oxidised to a cystine.

The protein belongs to the fimbrial protein family.

It localises to the secreted. It is found in the fimbrium. Fimbriae (also called pili), polar filaments radiating from the surface of the bacterium to a length of 0.5-1.5 micrometers and numbering 100-300 per cell, enable bacteria to colonize the epithelium of specific host organs. Its function is as follows. Seems to anchor the pilus to the bacterial cell. In addition the stoichiometric relationship between PrsH and PrsA determines the pilus length. The chain is PRS fimbrial minor pilin protein (prsH) from Escherichia coli.